The sequence spans 807 residues: 1,4-alpha-glucan branching enzyme GlgB (807 aa).

Residue aspartate 405 is the Nucleophile of the active site. Glutamate 458 serves as the catalytic Proton donor.

The protein belongs to the glycosyl hydrolase 13 family. GlgB subfamily. Monomer.

It catalyses the reaction Transfers a segment of a (1-&gt;4)-alpha-D-glucan chain to a primary hydroxy group in a similar glucan chain.. The protein operates within glycan biosynthesis; glycogen biosynthesis. Catalyzes the formation of the alpha-1,6-glucosidic linkages in glycogen by scission of a 1,4-alpha-linked oligosaccharide from growing alpha-1,4-glucan chains and the subsequent attachment of the oligosaccharide to the alpha-1,6 position. This Histophilus somni (strain 129Pt) (Haemophilus somnus) protein is 1,4-alpha-glucan branching enzyme GlgB.